Reading from the N-terminus, the 107-residue chain is Large ribosomal subunit protein uL24 (107 aa).

The protein belongs to the universal ribosomal protein uL24 family. In terms of assembly, part of the 50S ribosomal subunit.

In terms of biological role, one of two assembly initiator proteins, it binds directly to the 5'-end of the 23S rRNA, where it nucleates assembly of the 50S subunit. One of the proteins that surrounds the polypeptide exit tunnel on the outside of the subunit. The polypeptide is Large ribosomal subunit protein uL24 (Neisseria gonorrhoeae (strain ATCC 700825 / FA 1090)).